The following is a 211-amino-acid chain: Probable nicotinate-nucleotide adenylyltransferase (211 aa).

It belongs to the NadD family.

It catalyses the reaction nicotinate beta-D-ribonucleotide + ATP + H(+) = deamido-NAD(+) + diphosphate. Its pathway is cofactor biosynthesis; NAD(+) biosynthesis; deamido-NAD(+) from nicotinate D-ribonucleotide: step 1/1. In terms of biological role, catalyzes the reversible adenylation of nicotinate mononucleotide (NaMN) to nicotinic acid adenine dinucleotide (NaAD). This Legionella pneumophila (strain Corby) protein is Probable nicotinate-nucleotide adenylyltransferase.